We begin with the raw amino-acid sequence, 761 residues long: MALPALGLDPWSLLGLFLFQLLQLLLPTTTAGGGGQGPMPRVRYYAGDERRALSFFHQKGLQDFDTLLLSGDGNTLYVGAREAILALDIQDPGVPRLKNMIPWPASDRKKSECAFKKKSNETQCFNFIRVLVSYNVTHLYTCGTFAFSPACTFIELQDSYLLPISEDKVMEGKGQSPFDPAHKHTAVLVDGMLYSGTMNNFLGSEPILMRTLGSQPVLKTDNFLRWLHHDASFVAAIPSTQVVYFFFEETASEFDFFERLHTSRVARVCKNDVGGEKLLQKKWTTFLKAQLLCTQPGQLPFNVIRHAVLLPADSPTAPHIYAVFTSQWQVGGTRSSAVCAFSLLDIERVFKGKYKELNKETSRWTTYRGPETNPRPGSCSVGPSSDKALTFMKDHFLMDEQVVGTPLLVKSGVEYTRLAVETAQGLDGHSHLVMYLGTTTGSLHKAVVSGDSSAHLVEEIQLFPDPEPVRNLQLAPTQGAVFVGFSGGVWRVPRANCSVYESCVDCVLARDPHCAWDPESRTCCLLSAPNLNSWKQDMERGNPEWACASGPMSRSLRPQSRPQIIKEVLAVPNSILELPCPHLSALASYYWSHGPAAVPEASSTVYNGSLLLIVQDGVGGLYQCWATENGFSYPVISYWVDSQDQTLALDPELAGIPREHVKVPLTRVSGGAALAAQQSYWPHFVTVTVLFALVLSGALIILVASPLRALRARGKVQGCETLRPGEKAPLSREQHLQSPKECRTSASDVDADNNCLGTEVA.

Positions 1-32 are cleaved as a signal peptide; that stretch reads MALPALGLDPWSLLGLFLFQLLQLLLPTTTAG. Topologically, residues 33–683 are extracellular; that stretch reads GGGQGPMPRV…LAAQQSYWPH (651 aa). One can recognise a Sema domain in the interval 36-494; that stretch reads QGPMPRVRYY…FSGGVWRVPR (459 aa). Residues C113 and C124 are joined by a disulfide bond. 2 N-linked (GlcNAc...) asparagine glycosylation sites follow: N120 and N135. Disulfide bonds link C142–C151, C269–C379, and C293–C339. An N-linked (GlcNAc...) asparagine glycan is attached at N496. One can recognise a PSI domain in the interval 496-548; the sequence is NCSVYESCVDCVLARDPHCAWDPESRTCCLLSAPNLNSWKQDMERGNPEWACA. 3 disulfides stabilise this stretch: C497–C514, C506–C523, and C580–C624. In terms of domain architecture, Ig-like C2-type spans 573–631; it reads NSILELPCPHLSALASYYWSHGPAAVPEASSTVYNGSLLLIVQDGVGGLYQCWATENGF. N-linked (GlcNAc...) asparagine glycosylation occurs at N607. The chain crosses the membrane as a helical span at residues 684-704; it reads FVTVTVLFALVLSGALIILVA. Over 705-761 the chain is Cytoplasmic; sequence SPLRALRARGKVQGCETLRPGEKAPLSREQHLQSPKECRTSASDVDADNNCLGTEVA. Positions 722-749 are disordered; sequence LRPGEKAPLSREQHLQSPKECRTSASDV. The span at 723–743 shows a compositional bias: basic and acidic residues; sequence RPGEKAPLSREQHLQSPKECR.

This sequence belongs to the semaphorin family. In terms of assembly, interacts with PLXNB1, PLXNB2, PLXNB3, PLXND1 and TIMD2.

The protein resides in the cell membrane. Functionally, cell surface receptor for PLXNB1, PLXNB2, PLXNB3 and PLXND1 that plays an important role in cell-cell signaling. Regulates glutamatergic and GABAergic synapse development. Promotes the development of inhibitory synapses in a PLXNB1-dependent manner and promotes the development of excitatory synapses in a PLXNB2-dependent manner. Plays a role in priming antigen-specific T-cells, promotes differentiation of Th1 T-helper cells, and thereby contributes to adaptive immunity. Promotes phosphorylation of TIMD2. Inhibits angiogenesis. Promotes axon growth cone collapse. Inhibits axonal extension by providing local signals to specify territories inaccessible for growing axons. This chain is Semaphorin-4A (SEMA4A), found in Homo sapiens (Human).